The following is a 381-amino-acid chain: Anti-sigma-I factor RsgI (381 aa).

Topologically, residues 1–63 are cytoplasmic; the sequence is MRRGIIVEKN…FDFFKLRPFK (63 aa). One can recognise a RsgI N-terminal anti-sigma domain in the interval 2-50; that stretch reads RRGIIVEKNKKFVTLLTPDGQFLKAKNDRHSYEIGEEIMLPSETRMGRR. The chain crosses the membrane as a helical span at residues 64–84; it reads MGIFTMTAIMLFIFIVLPVFS. Residues 85 to 381 lie on the Extracellular side of the membrane; it reads NNKAYAYMTI…NEDSPSAPGE (297 aa). The disordered stretch occupies residues 198–381; the sequence is SDMQTREKAK…NEDSPSAPGE (184 aa). Basic and acidic residues-rich tracts occupy residues 200-210, 219-244, 273-321, and 349-359; these read MQTREKAKKEG, SNEK…QKSD, GDQK…DKGN, and SRRDNASDRRN.

In terms of assembly, interacts (via RsgI N-terminal anti-sigma domain) with SigI.

Its subcellular location is the cell membrane. Anti-sigma factor for SigI. Negatively regulates SigI activity through direct interaction. This chain is Anti-sigma-I factor RsgI, found in Bacillus subtilis (strain 168).